Reading from the N-terminus, the 100-residue chain is Putative pterin-4-alpha-carbinolamine dehydratase (100 aa).

Belongs to the pterin-4-alpha-carbinolamine dehydratase family.

The catalysed reaction is (4aS,6R)-4a-hydroxy-L-erythro-5,6,7,8-tetrahydrobiopterin = (6R)-L-erythro-6,7-dihydrobiopterin + H2O. In Bradyrhizobium sp. (strain ORS 278), this protein is Putative pterin-4-alpha-carbinolamine dehydratase.